Reading from the N-terminus, the 430-residue chain is Phosphomethylpyrimidine synthase (430 aa).

Residues asparagine 67, methionine 96, tyrosine 125, histidine 161, 183 to 185, 224 to 227, and glutamate 263 each bind substrate; these read SRG and DALR. Histidine 267 is a Zn(2+) binding site. Tyrosine 290 is a substrate binding site. Histidine 331 provides a ligand contact to Zn(2+). [4Fe-4S] cluster contacts are provided by cysteine 406, cysteine 409, and cysteine 413.

This sequence belongs to the ThiC family. Homodimer. The cofactor is [4Fe-4S] cluster.

It catalyses the reaction 5-amino-1-(5-phospho-beta-D-ribosyl)imidazole + S-adenosyl-L-methionine = 4-amino-2-methyl-5-(phosphooxymethyl)pyrimidine + CO + 5'-deoxyadenosine + formate + L-methionine + 3 H(+). Its pathway is cofactor biosynthesis; thiamine diphosphate biosynthesis. In terms of biological role, catalyzes the synthesis of the hydroxymethylpyrimidine phosphate (HMP-P) moiety of thiamine from aminoimidazole ribotide (AIR) in a radical S-adenosyl-L-methionine (SAM)-dependent reaction. The polypeptide is Phosphomethylpyrimidine synthase (Campylobacter jejuni subsp. jejuni serotype O:6 (strain 81116 / NCTC 11828)).